The following is a 98-amino-acid chain: MVAIHKPAHDIILKPVVSEKSYALSDMGQYTFVVAPNANKVQIKQAIEEIFKVKVTNVNTLNRAGKRTRTRTGYGRRVNQKRAIVTVAEGQSIDIFGN.

The protein belongs to the universal ribosomal protein uL23 family. Part of the 50S ribosomal subunit. Contacts protein L29, and trigger factor when it is bound to the ribosome.

Its function is as follows. One of the early assembly proteins it binds 23S rRNA. One of the proteins that surrounds the polypeptide exit tunnel on the outside of the ribosome. Forms the main docking site for trigger factor binding to the ribosome. The chain is Large ribosomal subunit protein uL23 from Bifidobacterium animalis subsp. lactis (strain AD011).